A 336-amino-acid polypeptide reads, in one-letter code: UDP-3-O-acylglucosamine N-acyltransferase (336 aa).

His-233 acts as the Proton acceptor in catalysis.

Belongs to the transferase hexapeptide repeat family. LpxD subfamily. As to quaternary structure, homotrimer.

The catalysed reaction is a UDP-3-O-[(3R)-3-hydroxyacyl]-alpha-D-glucosamine + a (3R)-hydroxyacyl-[ACP] = a UDP-2-N,3-O-bis[(3R)-3-hydroxyacyl]-alpha-D-glucosamine + holo-[ACP] + H(+). Its pathway is bacterial outer membrane biogenesis; LPS lipid A biosynthesis. Functionally, catalyzes the N-acylation of UDP-3-O-acylglucosamine using 3-hydroxyacyl-ACP as the acyl donor. Is involved in the biosynthesis of lipid A, a phosphorylated glycolipid that anchors the lipopolysaccharide to the outer membrane of the cell. This Helicobacter pylori (strain HPAG1) protein is UDP-3-O-acylglucosamine N-acyltransferase.